We begin with the raw amino-acid sequence, 504 residues long: Maturase K (504 aa).

Belongs to the intron maturase 2 family. MatK subfamily.

Its subcellular location is the plastid. The protein resides in the chloroplast. Its function is as follows. Usually encoded in the trnK tRNA gene intron. Probably assists in splicing its own and other chloroplast group II introns. The sequence is that of Maturase K from Impatiens capensis (Spotted jewelweed).